The following is a 105-amino-acid chain: NADH-quinone oxidoreductase subunit K (105 aa).

3 helical membrane passes run Val8–Ile28, Ile33–Ile53, and Val65–Val85.

Belongs to the complex I subunit 4L family. In terms of assembly, NDH-1 is composed of 14 different subunits. Subunits NuoA, H, J, K, L, M, N constitute the membrane sector of the complex.

The protein resides in the cell inner membrane. It carries out the reaction a quinone + NADH + 5 H(+)(in) = a quinol + NAD(+) + 4 H(+)(out). NDH-1 shuttles electrons from NADH, via FMN and iron-sulfur (Fe-S) centers, to quinones in the respiratory chain. The immediate electron acceptor for the enzyme in this species is believed to be ubiquinone. Couples the redox reaction to proton translocation (for every two electrons transferred, four hydrogen ions are translocated across the cytoplasmic membrane), and thus conserves the redox energy in a proton gradient. This chain is NADH-quinone oxidoreductase subunit K, found in Francisella philomiragia subsp. philomiragia (strain ATCC 25017 / CCUG 19701 / FSC 153 / O#319-036).